The chain runs to 246 residues: MVKEFVQDEEKQRLLLDEHTEKHFTAGEVVRDIIIGVSDGLTVPFALAAGLSGANAPSALVLTAGLAEVAAGAISMGLGGYLAAKSDADHYHRELQREQEEIDTVPDTEAAEIADILSQYGLGPEEYGPVVNSLRSNPKAWLEFMMKFELGLEKPEPRRALMSAGTIALAYVVGGLVPLLPYMFVPTADRAMATSVVVTLAALLFFGYVKGRFTGNRPFISAFQTAVIGALASAAAFGMAKAVQSI.

Residues Met1–Asp32 lie on the Cytoplasmic side of the membrane. Residues Ile33 to Gly53 traverse the membrane as a helical segment. Topologically, residues Ala54–Ser58 are vacuolar. The chain crosses the membrane as a helical span at residues Ala59–Gly79. Topologically, residues Gly80–Ala164 are cytoplasmic. Positions Ser86–Leu161 are cytoplasmic metal binding domain (MBD). Residues Glu98, Glu101, Glu109, Glu112, Met145, and Glu149 each contribute to the Fe cation site. The helical transmembrane segment at Gly165 to Val185 threads the bilayer. Over Pro186–Arg190 the chain is Vacuolar. The chain crosses the membrane as a helical span at residues Ala191–Gly211. At Arg212–Pro218 the chain is on the cytoplasmic side. Residues Phe219 to Met239 traverse the membrane as a helical segment. The Vacuolar portion of the chain corresponds to Ala240 to Ile246.

This sequence belongs to the CCC1 family. As to quaternary structure, homodimer. The dimeric interaction is mediated by both the transmembrane domains (TMDs) and the cytoplasmic metal binding domain (MBD). As to expression, expressed in leaf sheaths and at lower level in leaf blades.

Its subcellular location is the vacuole membrane. It carries out the reaction Fe(2+)(in) = Fe(2+)(out). Vacuolar iron transporter involved in the transfer of iron ions from the cytosol to the vacuole for intracellular iron storage. Vacuolar iron storage is required for seed embryo and seedling development. May be involved in the regulation of iron translocation between flag leaves and seeds. Can transport zinc ions from the cytosol to the vacuole. This chain is Vacuolar iron transporter 2, found in Oryza sativa subsp. japonica (Rice).